A 465-amino-acid polypeptide reads, in one-letter code: Deoxyguanosinetriphosphate triphosphohydrolase-like protein (465 aa).

The segment at 1–22 (MKWDKLLNDKRRRESGVTRSKN) is disordered. The HD domain maps to 63–252 (RLTHSMEVST…LEVADDIAYL (190 aa)).

This sequence belongs to the dGTPase family. Type 3 subfamily.

The sequence is that of Deoxyguanosinetriphosphate triphosphohydrolase-like protein from Listeria monocytogenes serovar 1/2a (strain ATCC BAA-679 / EGD-e).